Consider the following 141-residue polypeptide: Protein C19orf12 (141 aa).

Residues 40–60 (FVGGLVGGPPGLAVGGAVGGL) traverse the membrane as a helical segment.

Belongs to the C19orf12 family.

The protein resides in the mitochondrion. The protein localises to the mitochondrion membrane. It is found in the endoplasmic reticulum. Its subcellular location is the cytoplasm. It localises to the cytosol. In Homo sapiens (Human), this protein is Protein C19orf12 (C19orf12).